The sequence spans 470 residues: Ribulose bisphosphate carboxylase large chain (470 aa).

Substrate is bound by residues asparagine 115 and threonine 165. Catalysis depends on lysine 167, which acts as the Proton acceptor. Lysine 169 lines the substrate pocket. Positions 193, 195, and 196 each coordinate Mg(2+). Position 193 is an N6-carboxylysine (lysine 193). Histidine 286 functions as the Proton acceptor in the catalytic mechanism. The substrate site is built by arginine 287, histidine 319, and serine 371.

This sequence belongs to the RuBisCO large chain family. Type I subfamily. Heterohexadecamer of 8 large chains and 8 small chains. Forms a CsoS2-CsoS1-RuBisCO complex. Mg(2+) serves as cofactor.

Its subcellular location is the carboxysome. It catalyses the reaction 2 (2R)-3-phosphoglycerate + 2 H(+) = D-ribulose 1,5-bisphosphate + CO2 + H2O. It carries out the reaction D-ribulose 1,5-bisphosphate + O2 = 2-phosphoglycolate + (2R)-3-phosphoglycerate + 2 H(+). Its function is as follows. RuBisCO catalyzes two reactions: the carboxylation of D-ribulose 1,5-bisphosphate, the primary event in carbon dioxide fixation, as well as the oxidative fragmentation of the pentose substrate in the photorespiration process. Both reactions occur simultaneously and in competition at the same active site. The protein is Ribulose bisphosphate carboxylase large chain of Prochlorococcus marinus (strain MIT 9313).